We begin with the raw amino-acid sequence, 355 residues long: Guanine nucleotide-binding protein G(q) subunit alpha (355 aa).

Cys-3 is lipidated: S-palmitoyl cysteine. The 324-residue stretch at 32–355 folds into the G-alpha domain; it reads KEIKLLLLGT…QHITEVVPGL (324 aa). The G1 motif stretch occupies residues 35–48; the sequence is KLLLLGTGESGKST. GTP is bound by residues 40 to 47, 174 to 180, 199 to 203, 269 to 272, and Ala-326; these read GTGESGKS, LRVRVPT, DVGGQ, and NKKD. Residues Ser-47 and Thr-180 each coordinate Mg(2+). The segment at 172 to 180 is G2 motif; sequence DVLRVRVPT. The G3 motif stretch occupies residues 195 to 204; the sequence is FKMVDVGGQR. Residues 265-272 form a G4 motif region; it reads ILFLNKKD. The G5 motif stretch occupies residues 324 to 329; sequence TCATDT.

Belongs to the G-alpha family. G(q) subfamily. In terms of assembly, g proteins are composed of 3 units; alpha, beta and gamma. The alpha chain contains the guanine nucleotide binding site.

Functionally, guanine nucleotide-binding proteins (G proteins) are involved as modulators or transducers in various transmembrane signaling systems. In Geodia cydonium (Sponge), this protein is Guanine nucleotide-binding protein G(q) subunit alpha.